We begin with the raw amino-acid sequence, 118 residues long: Basic phospholipase A2 nigexine (118 aa).

7 cysteine pairs are disulfide-bonded: cysteine 11–cysteine 70, cysteine 26–cysteine 117, cysteine 28–cysteine 44, cysteine 43–cysteine 98, cysteine 50–cysteine 91, cysteine 59–cysteine 84, and cysteine 77–cysteine 89. The Ca(2+) site is built by tyrosine 27, glycine 29, and glycine 31. The active site involves histidine 47. Ca(2+) is bound at residue aspartate 48. The Coagulation factor Xa binding motif motif lies at 52-69 (EKAGKMGCWPYFTLYKYK). Aspartate 92 is an active-site residue.

It belongs to the phospholipase A2 family. Group I subfamily. D49 sub-subfamily. Ca(2+) is required as a cofactor. In terms of tissue distribution, expressed by the venom gland.

It is found in the secreted. It catalyses the reaction a 1,2-diacyl-sn-glycero-3-phosphocholine + H2O = a 1-acyl-sn-glycero-3-phosphocholine + a fatty acid + H(+). Functionally, snake venom phospholipase A2 (PLA2) that shows anticoagulant activity, has cytotoxic activity and affects neuromuscular transmission in vitro. PLA2 catalyzes the calcium-dependent hydrolysis of the 2-acyl groups in 3-sn-phosphoglycerides. This chain is Basic phospholipase A2 nigexine, found in Naja pallida (Red spitting cobra).